The following is a 283-amino-acid chain: Elongation factor Ts (283 aa).

The segment at 79–82 (TDFV) is involved in Mg(2+) ion dislocation from EF-Tu.

The protein belongs to the EF-Ts family.

The protein localises to the cytoplasm. Its function is as follows. Associates with the EF-Tu.GDP complex and induces the exchange of GDP to GTP. It remains bound to the aminoacyl-tRNA.EF-Tu.GTP complex up to the GTP hydrolysis stage on the ribosome. This is Elongation factor Ts from Shewanella putrefaciens (strain CN-32 / ATCC BAA-453).